Here is a 120-residue protein sequence, read N- to C-terminus: NAD(P)H-quinone oxidoreductase subunit 3 (120 aa).

Transmembrane regions (helical) follow at residues 7–27 (YEYF…SLTA), 64–84 (MFAL…PWAV), and 89–109 (LGLL…VALV).

Belongs to the complex I subunit 3 family. NDH-1 can be composed of about 15 different subunits; different subcomplexes with different compositions have been identified which probably have different functions.

The protein localises to the cellular thylakoid membrane. It catalyses the reaction a plastoquinone + NADH + (n+1) H(+)(in) = a plastoquinol + NAD(+) + n H(+)(out). It carries out the reaction a plastoquinone + NADPH + (n+1) H(+)(in) = a plastoquinol + NADP(+) + n H(+)(out). NDH-1 shuttles electrons from an unknown electron donor, via FMN and iron-sulfur (Fe-S) centers, to quinones in the respiratory and/or the photosynthetic chain. The immediate electron acceptor for the enzyme in this species is believed to be plastoquinone. Couples the redox reaction to proton translocation, and thus conserves the redox energy in a proton gradient. Cyanobacterial NDH-1 also plays a role in inorganic carbon-concentration. The protein is NAD(P)H-quinone oxidoreductase subunit 3 of Microcystis aeruginosa (strain NIES-843 / IAM M-2473).